A 119-amino-acid chain; its full sequence is MVKLAFPRELRLLTPSHFTFVFQQPQRAGTPQITILGRLNELGHPRIGLTVAKKHVKRAHERNRIKRLARESFRLHQHTLPSMDFVVLVKKGVADLDNRALTEALEKLWRRHCRQAPAS.

It belongs to the RnpA family. As to quaternary structure, consists of a catalytic RNA component (M1 or rnpB) and a protein subunit.

It catalyses the reaction Endonucleolytic cleavage of RNA, removing 5'-extranucleotides from tRNA precursor.. Its function is as follows. RNaseP catalyzes the removal of the 5'-leader sequence from pre-tRNA to produce the mature 5'-terminus. It can also cleave other RNA substrates such as 4.5S RNA. The protein component plays an auxiliary but essential role in vivo by binding to the 5'-leader sequence and broadening the substrate specificity of the ribozyme. The polypeptide is Ribonuclease P protein component (Yersinia enterocolitica serotype O:8 / biotype 1B (strain NCTC 13174 / 8081)).